We begin with the raw amino-acid sequence, 267 residues long: Acetyl-coenzyme A carboxylase carboxyl transferase subunit beta 1 (267 aa).

Residues 9–267 (TWQACPKCGR…NYGIGRSAHG (259 aa)) form the CoA carboxyltransferase N-terminal domain. Positions 13, 16, 31, and 34 each coordinate Zn(2+). The segment at 13–34 (CPKCGRHVHQRQWGTYQQCPYC) adopts a C4-type zinc-finger fold.

The protein belongs to the AccD/PCCB family. In terms of assembly, acetyl-CoA carboxylase is a heterohexamer composed of biotin carboxyl carrier protein (AccB), biotin carboxylase (AccC) and two subunits each of ACCase subunit alpha (AccA) and ACCase subunit beta (AccD). It depends on Zn(2+) as a cofactor.

The protein localises to the cytoplasm. The catalysed reaction is N(6)-carboxybiotinyl-L-lysyl-[protein] + acetyl-CoA = N(6)-biotinyl-L-lysyl-[protein] + malonyl-CoA. It participates in lipid metabolism; malonyl-CoA biosynthesis; malonyl-CoA from acetyl-CoA: step 1/1. In terms of biological role, component of the acetyl coenzyme A carboxylase (ACC) complex. Biotin carboxylase (BC) catalyzes the carboxylation of biotin on its carrier protein (BCCP) and then the CO(2) group is transferred by the transcarboxylase to acetyl-CoA to form malonyl-CoA. This Lactiplantibacillus plantarum (strain ATCC BAA-793 / NCIMB 8826 / WCFS1) (Lactobacillus plantarum) protein is Acetyl-coenzyme A carboxylase carboxyl transferase subunit beta 1.